We begin with the raw amino-acid sequence, 92 residues long: Small ribosomal subunit protein uS19 (92 aa).

The interval 72 to 92 (GEFSPTRSFRGHAGAKNKGKK) is disordered. Residues 80-92 (FRGHAGAKNKGKK) are compositionally biased toward basic residues.

It belongs to the universal ribosomal protein uS19 family.

Its function is as follows. Protein S19 forms a complex with S13 that binds strongly to the 16S ribosomal RNA. This Flavobacterium johnsoniae (strain ATCC 17061 / DSM 2064 / JCM 8514 / BCRC 14874 / CCUG 350202 / NBRC 14942 / NCIMB 11054 / UW101) (Cytophaga johnsonae) protein is Small ribosomal subunit protein uS19.